The primary structure comprises 281 residues: N-methyltransferase tcpN (281 aa).

This sequence belongs to the methyltransferase superfamily. LaeA methyltransferase family.

Its pathway is secondary metabolite biosynthesis. N-methyltransferase; part of the gene cluster that mediates the biosynthesis of an unusual class of epipolythiodioxopiperazines (ETPs) lacking the reactive thiol group important for toxicity. Firstly, L-tyrosine is prenylated by tcpD, before undergoing condensation with L-glycine in a reaction catalyzed by the NRPS tcpP leading to the diketopiperazine (DKP) backbone. Afterwards the alpha-carbon of tyrosine is oxidized by the cytochrome P450 tcpC to form a hydroxyl group. However, in contrast other ETP biosynthesis pathways studied so far, tcpC is not able to bishydroxylate the DKP at both alpha-carbon positions, but hydroxylates the alpha-carbon of the tyrosine part and the nitrogen of the glycine part. The next steps involve an alpha,beta-elimination reaction catalyzed by tcpI, a methylation by the methyltransferase tcpN the action of the four enzyme cascade tcpG/K/J/I. Due to a dysfunctional cytochrome P450 monooxygenase tcpC, the pathway leads to the biosynthesis of probable non-toxic metabolites lacking the reactive thiol group. In Claviceps purpurea (strain 20.1) (Ergot fungus), this protein is N-methyltransferase tcpN.